The primary structure comprises 365 residues: tRNA-specific 2-thiouridylase MnmA (365 aa).

Residues alanine 6–serine 13 and methionine 32 contribute to the ATP site. Residue cysteine 101 is the Nucleophile of the active site. Cysteine 101 and cysteine 199 are disulfide-bonded. ATP is bound at residue glycine 125. The interval lysine 148–glutamine 150 is interaction with tRNA. Cysteine 199 (cysteine persulfide intermediate) is an active-site residue.

This sequence belongs to the MnmA/TRMU family.

The protein resides in the cytoplasm. It carries out the reaction S-sulfanyl-L-cysteinyl-[protein] + uridine(34) in tRNA + AH2 + ATP = 2-thiouridine(34) in tRNA + L-cysteinyl-[protein] + A + AMP + diphosphate + H(+). Functionally, catalyzes the 2-thiolation of uridine at the wobble position (U34) of tRNA, leading to the formation of s(2)U34. The protein is tRNA-specific 2-thiouridylase MnmA of Kineococcus radiotolerans (strain ATCC BAA-149 / DSM 14245 / SRS30216).